Here is a 387-residue protein sequence, read N- to C-terminus: Krueppel-like factor 17 (387 aa).

Disordered stretches follow at residues 28–54 (FLDM…IRRV), 213–234 (SRDP…PLES), and 257–277 (RREA…SPVS). Residues 30–46 (DMSSSPGSGGVHTSWNR) are compositionally biased toward polar residues. Residues 257 to 270 (RREAQNSRAQERAS) show a composition bias toward basic and acidic residues. 3 C2H2-type zinc fingers span residues 280-304 (YHCE…QRKH), 310-334 (YKCT…TRIH), and 340-362 (HKCD…QRTH). The tract at residues 357–387 (QHQRTHMRMPRSPDPQADSGRRAGPLPAPHL) is disordered.

The protein belongs to the Sp1 C2H2-type zinc-finger protein family.

It localises to the nucleus. Its function is as follows. Transcription repressor that binds to the promoter of target genes and prevents their expression. Acts as a negative regulator of epithelial-mesenchymal transition and metastasis in breast cancer. Specifically binds the 5'-CACCC-3' sequence in the promoter of ID1, a key metastasis regulator in breast cancer, and repress its expression. May be a germ cell-specific transcription factor that plays important roles in spermatid differentiation and oocyte development. This Sus scrofa (Pig) protein is Krueppel-like factor 17 (KLF17).